Reading from the N-terminus, the 98-residue chain is Acylphosphatase (98 aa).

One can recognise an Acylphosphatase-like domain in the interval 12 to 98 (TYYVRVRGVV…ERRFERFQQQ (87 aa)). Catalysis depends on residues R27 and N45.

The protein belongs to the acylphosphatase family.

It catalyses the reaction an acyl phosphate + H2O = a carboxylate + phosphate + H(+). The polypeptide is Acylphosphatase (acyP) (Burkholderia vietnamiensis (strain G4 / LMG 22486) (Burkholderia cepacia (strain R1808))).